A 422-amino-acid chain; its full sequence is Cysteate synthase (422 aa).

K105 is subject to N6-(pyridoxal phosphate)lysine. Pyridoxal 5'-phosphate-binding residues include N131 and T379.

It belongs to the threonine synthase family. Cysteate synthase subfamily. As to quaternary structure, homotrimer. Requires pyridoxal 5'-phosphate as cofactor.

It carries out the reaction O-phospho-L-serine + sulfite + H(+) = L-cysteate + phosphate. The protein operates within cofactor biosynthesis; coenzyme M biosynthesis. In terms of biological role, specifically catalyzes the beta-elimination of phosphate from L-phosphoserine and the beta-addition of sulfite to the dehydroalanine intermediate to produce L-cysteate. This is Cysteate synthase from Methanospirillum hungatei JF-1 (strain ATCC 27890 / DSM 864 / NBRC 100397 / JF-1).